A 194-amino-acid chain; its full sequence is Protein GrpE (194 aa).

The tract at residues 1-53 (MVENEKTSVEETEEKAETEDEMLTEDPSNEDSDEANEEGNELSEEEKRIAELE) is disordered. Over residues 10 to 44 (EETEEKAETEDEMLTEDPSNEDSDEANEEGNELSE) the composition is skewed to acidic residues.

The protein belongs to the GrpE family. In terms of assembly, homodimer.

It localises to the cytoplasm. Participates actively in the response to hyperosmotic and heat shock by preventing the aggregation of stress-denatured proteins, in association with DnaK and GrpE. It is the nucleotide exchange factor for DnaK and may function as a thermosensor. Unfolded proteins bind initially to DnaJ; upon interaction with the DnaJ-bound protein, DnaK hydrolyzes its bound ATP, resulting in the formation of a stable complex. GrpE releases ADP from DnaK; ATP binding to DnaK triggers the release of the substrate protein, thus completing the reaction cycle. Several rounds of ATP-dependent interactions between DnaJ, DnaK and GrpE are required for fully efficient folding. This is Protein GrpE from Halalkalibacterium halodurans (strain ATCC BAA-125 / DSM 18197 / FERM 7344 / JCM 9153 / C-125) (Bacillus halodurans).